Reading from the N-terminus, the 166-residue chain is Small ribosomal subunit protein uS5 (166 aa).

One can recognise an S5 DRBM domain in the interval 11–74; that stretch reads LQEKLIAVNR…EKARRNMINV (64 aa).

Belongs to the universal ribosomal protein uS5 family. In terms of assembly, part of the 30S ribosomal subunit. Contacts proteins S4 and S8.

Functionally, with S4 and S12 plays an important role in translational accuracy. Its function is as follows. Located at the back of the 30S subunit body where it stabilizes the conformation of the head with respect to the body. This chain is Small ribosomal subunit protein uS5, found in Enterobacter sp. (strain 638).